The chain runs to 347 residues: Histone deacetylase 11 (347 aa).

The interval 14-318 (KRWPIVYSPR…ARIIADSILN (305 aa)) is histone deacetylase. His143 is an active-site residue.

Belongs to the histone deacetylase family. As to quaternary structure, interacts with HDAC6.

The protein resides in the nucleus. The catalysed reaction is N(6)-acetyl-L-lysyl-[histone] + H2O = L-lysyl-[histone] + acetate. Functionally, responsible for the deacetylation of lysine residues on the N-terminal part of the core histones (H2A, H2B, H3 and H4). Histone deacetylation gives a tag for epigenetic repression and plays an important role in transcriptional regulation, cell cycle progression and developmental events. Histone deacetylases act via the formation of large multiprotein complexes. In Mus musculus (Mouse), this protein is Histone deacetylase 11 (Hdac11).